The primary structure comprises 722 residues: Zinc finger BED domain-containing protein RICESLEEPER 1 (722 aa).

The BED-type zinc finger occupies 66–126; it reads RKKSLVWEHF…GSCPKIKNQE (61 aa). Zn(2+) is bound by residues Cys89, Cys92, His113, and Cys119. Residues 572 to 592 form a disordered region; sequence VEQGGGNNAPASENSTQATAP. Over residues 580-592 the composition is skewed to polar residues; it reads APASENSTQATAP. Residues 617-702 form an HATC (Hobo-Ac-Tam3) domain region; it reads ELEQYLDESL…EALVCAKDWL (86 aa).

Homodimer.

The protein resides in the nucleus. Functionally, transposase-like protein that is essential for plant growth and development. May regulate global gene expression by recruiting other cellular factors. The chain is Zinc finger BED domain-containing protein RICESLEEPER 1 from Oryza sativa subsp. japonica (Rice).